Here is a 1032-residue protein sequence, read N- to C-terminus: Exportin-T (1032 aa).

The protein belongs to the exportin family.

It localises to the nucleus. It is found in the cytoplasm. Functionally, tRNA nucleus export receptor which facilitates tRNA translocation across the nuclear pore complex. Involved in pre-tRNA splicing, probably by affecting the interaction of pre-tRNA with splicing endonuclease. The chain is Exportin-T (los1) from Aspergillus fumigatus (strain ATCC MYA-4609 / CBS 101355 / FGSC A1100 / Af293) (Neosartorya fumigata).